We begin with the raw amino-acid sequence, 212 residues long: Thiamine-phosphate synthase (212 aa).

4-amino-2-methyl-5-(diphosphooxymethyl)pyrimidine is bound at residue 38–42; sequence QLREK. Aspartate 71 and aspartate 90 together coordinate Mg(2+). Lysine 138 is a 4-amino-2-methyl-5-(diphosphooxymethyl)pyrimidine binding site. Glycine 166 contributes to the 2-[(2R,5Z)-2-carboxy-4-methylthiazol-5(2H)-ylidene]ethyl phosphate binding site.

This sequence belongs to the thiamine-phosphate synthase family. The cofactor is Mg(2+).

The enzyme catalyses 2-[(2R,5Z)-2-carboxy-4-methylthiazol-5(2H)-ylidene]ethyl phosphate + 4-amino-2-methyl-5-(diphosphooxymethyl)pyrimidine + 2 H(+) = thiamine phosphate + CO2 + diphosphate. It catalyses the reaction 2-(2-carboxy-4-methylthiazol-5-yl)ethyl phosphate + 4-amino-2-methyl-5-(diphosphooxymethyl)pyrimidine + 2 H(+) = thiamine phosphate + CO2 + diphosphate. It carries out the reaction 4-methyl-5-(2-phosphooxyethyl)-thiazole + 4-amino-2-methyl-5-(diphosphooxymethyl)pyrimidine + H(+) = thiamine phosphate + diphosphate. It functions in the pathway cofactor biosynthesis; thiamine diphosphate biosynthesis; thiamine phosphate from 4-amino-2-methyl-5-diphosphomethylpyrimidine and 4-methyl-5-(2-phosphoethyl)-thiazole: step 1/1. Its function is as follows. Condenses 4-methyl-5-(beta-hydroxyethyl)thiazole monophosphate (THZ-P) and 2-methyl-4-amino-5-hydroxymethyl pyrimidine pyrophosphate (HMP-PP) to form thiamine monophosphate (TMP). The sequence is that of Thiamine-phosphate synthase from Chlamydia abortus (strain DSM 27085 / S26/3) (Chlamydophila abortus).